Consider the following 37-residue polypeptide: Cytochrome b6-f complex subunit 5 (37 aa).

The chain crosses the membrane as a helical span at residues 5-25; sequence SLFGIVLGLIPITLAGLFVTA.

This sequence belongs to the PetG family. In terms of assembly, the 4 large subunits of the cytochrome b6-f complex are cytochrome b6, subunit IV (17 kDa polypeptide, PetD), cytochrome f and the Rieske protein, while the 4 small subunits are PetG, PetL, PetM and PetN. The complex functions as a dimer.

The protein localises to the plastid. The protein resides in the chloroplast thylakoid membrane. Its function is as follows. Component of the cytochrome b6-f complex, which mediates electron transfer between photosystem II (PSII) and photosystem I (PSI), cyclic electron flow around PSI, and state transitions. PetG is required for either the stability or assembly of the cytochrome b6-f complex. The sequence is that of Cytochrome b6-f complex subunit 5 from Arabis hirsuta (Hairy rock-cress).